Consider the following 346-residue polypeptide: Tryptophan--tRNA ligase (346 aa).

Residues 10 to 12 and 18 to 19 each bind ATP; these read QAS and GN. A 'HIGH' region motif is present at residues 11-19; it reads ASGKQHLGN. Asp140 contributes to the L-tryptophan binding site. Residues 152–154, Ile191, and 200–204 contribute to the ATP site; these read GND and KMSKS. The 'KMSKS' region signature appears at 200–204; sequence KMSKS.

The protein belongs to the class-I aminoacyl-tRNA synthetase family. In terms of assembly, homodimer.

The protein resides in the cytoplasm. The catalysed reaction is tRNA(Trp) + L-tryptophan + ATP = L-tryptophyl-tRNA(Trp) + AMP + diphosphate + H(+). Its function is as follows. Catalyzes the attachment of tryptophan to tRNA(Trp). The polypeptide is Tryptophan--tRNA ligase (Mycoplasma pneumoniae (strain ATCC 29342 / M129 / Subtype 1) (Mycoplasmoides pneumoniae)).